Consider the following 201-residue polypeptide: CMRF35-like molecule 7 (201 aa).

Residues 1 to 17 form the signal peptide; sequence MWLPPALLLLSLSGCFS. Residues 18 to 120 enclose the Ig-like V-type domain; it reads IQGPESVRAP…PDLGTQVKVI (103 aa). The Extracellular portion of the chain corresponds to 18 to 151; it reads IQGPESVRAP…FIGSHKRNHY (134 aa). Cys-36 and Cys-104 are disulfide-bonded. The helical transmembrane segment at 152-172 threads the bilayer; the sequence is MLLVFVKVPILLILVTAILWL. At 173-201 the chain is on the cytoplasmic side; it reads KGSQRVPEEPGEQPIYMNFSEPLTKDMAT. The residue at position 188 (Tyr-188) is a Phosphotyrosine; by FYN.

Belongs to the CD300 family. In terms of assembly, interacts with TYROBP, which enhances cell surface expression and activation properties. Interacts with GRB2 in the presence of FYN. Phosphorylation on Tyr-188 by FYN is required for interaction with GRB2. Expressed exclusively in myeloid lineages.

Its subcellular location is the cell membrane. Acts as an activating immune receptor through its interaction with ITAM-bearing adapter TYROBP, and also independently by recruitment of GRB2. This is CMRF35-like molecule 7 (CD300LB) from Homo sapiens (Human).